The following is a 130-amino-acid chain: Probable 4-amino-4-deoxy-L-arabinose-phosphoundecaprenol flippase subunit ArnF (130 aa).

Residues methionine 1–glycine 4 are Cytoplasmic-facing. Residues tryptophan 5–methionine 25 traverse the membrane as a helical segment. Topologically, residues histidine 26–proline 44 are periplasmic. The helical transmembrane segment at leucine 45–alanine 65 threads the bilayer. Residues leucine 66–alanine 74 are Cytoplasmic-facing. Residues tyrosine 75–phenylalanine 95 traverse the membrane as a helical segment. The Periplasmic portion of the chain corresponds to asparagine 96–arginine 103. A helical membrane pass occupies residues leucine 104–lysine 124. Topologically, residues glycine 125 to arginine 130 are cytoplasmic.

This sequence belongs to the ArnF family. As to quaternary structure, heterodimer of ArnE and ArnF.

The protein localises to the cell inner membrane. It participates in bacterial outer membrane biogenesis; lipopolysaccharide biosynthesis. Its function is as follows. Translocates 4-amino-4-deoxy-L-arabinose-phosphoundecaprenol (alpha-L-Ara4N-phosphoundecaprenol) from the cytoplasmic to the periplasmic side of the inner membrane. The sequence is that of Probable 4-amino-4-deoxy-L-arabinose-phosphoundecaprenol flippase subunit ArnF from Sodalis glossinidius (strain morsitans).